We begin with the raw amino-acid sequence, 58 residues long: Large ribosomal subunit protein uL30 (58 aa).

The protein belongs to the universal ribosomal protein uL30 family. In terms of assembly, part of the 50S ribosomal subunit.

The chain is Large ribosomal subunit protein uL30 from Pseudomonas fluorescens (strain ATCC BAA-477 / NRRL B-23932 / Pf-5).